The chain runs to 360 residues: Ribosomal RNA large subunit methyltransferase M (360 aa).

S-adenosyl-L-methionine contacts are provided by residues Ser-187, 220–223 (CPGG), Asp-239, Asp-259, and Asp-276. Lys-305 (proton acceptor) is an active-site residue.

Belongs to the class I-like SAM-binding methyltransferase superfamily. RNA methyltransferase RlmE family. RlmM subfamily. As to quaternary structure, monomer.

It localises to the cytoplasm. The catalysed reaction is cytidine(2498) in 23S rRNA + S-adenosyl-L-methionine = 2'-O-methylcytidine(2498) in 23S rRNA + S-adenosyl-L-homocysteine + H(+). In terms of biological role, catalyzes the 2'-O-methylation at nucleotide C2498 in 23S rRNA. The polypeptide is Ribosomal RNA large subunit methyltransferase M (Shewanella halifaxensis (strain HAW-EB4)).